The primary structure comprises 123 residues: Large ribosomal subunit protein bL12 (123 aa).

The protein belongs to the bacterial ribosomal protein bL12 family. Homodimer. Part of the ribosomal stalk of the 50S ribosomal subunit. Forms a multimeric L10(L12)X complex, where L10 forms an elongated spine to which 2 to 4 L12 dimers bind in a sequential fashion. Binds GTP-bound translation factors.

In terms of biological role, forms part of the ribosomal stalk which helps the ribosome interact with GTP-bound translation factors. Is thus essential for accurate translation. The polypeptide is Large ribosomal subunit protein bL12 (Bartonella henselae (strain ATCC 49882 / DSM 28221 / CCUG 30454 / Houston 1) (Rochalimaea henselae)).